Here is a 461-residue protein sequence, read N- to C-terminus: Chromosomal replication initiator protein DnaA (461 aa).

The interval 1–68 (MINAWAQIEH…EKAAASVLGS (68 aa)) is domain I, interacts with DnaA modulators. The domain II stretch occupies residues 68 to 118 (SVPTITVVSGEEPAAAPRPVQVPAQKRPAAARTSGAEQMGLPLHYASRSAD). The interval 119–336 (SIKWMHSFDE…SCLRNLLLKA (218 aa)) is domain III, AAA+ region. The ATP site is built by glycine 162, glycine 164, lysine 165, and threonine 166. Positions 337-461 (RLLNQQITMD…VERNGRIIHP (125 aa)) are domain IV, binds dsDNA.

It belongs to the DnaA family. As to quaternary structure, oligomerizes as a right-handed, spiral filament on DNA at oriC.

The protein localises to the cytoplasm. Its function is as follows. Plays an essential role in the initiation and regulation of chromosomal replication. ATP-DnaA binds to the origin of replication (oriC) to initiate formation of the DNA replication initiation complex once per cell cycle. Binds the DnaA box (a 9 base pair repeat at the origin) and separates the double-stranded (ds)DNA. Forms a right-handed helical filament on oriC DNA; dsDNA binds to the exterior of the filament while single-stranded (ss)DNA is stabiized in the filament's interior. The ATP-DnaA-oriC complex binds and stabilizes one strand of the AT-rich DNA unwinding element (DUE), permitting loading of DNA polymerase. After initiation quickly degrades to an ADP-DnaA complex that is not apt for DNA replication. Binds acidic phospholipids. The polypeptide is Chromosomal replication initiator protein DnaA (Oleidesulfovibrio alaskensis (strain ATCC BAA-1058 / DSM 17464 / G20) (Desulfovibrio alaskensis)).